Consider the following 469-residue polypeptide: MNPNQKIITIGSICMVVGIISLILQIGNIISIWISHSIQTGSQNHTGICNQNIITYKNSTWVNQTYVNISNTNVVAGQDTTSVILTGNSSLCPIRGWAIYSKDNSIRIGSKGDVFVIREPFISCSHLECRTFFLTQGALLNDRHSNGTVKDRSPYRALMSCPVGEAPSPYNSRFESVAWSASACHDGMGWLTIGISGPDNGAVAVLKYNGIITETIKSWRKKILRTQESECACVNGSCFTIMTDGPSNGLASYKIFKIEKGKVTKSIELNAPNSHYEECSCYPDTGKVMCVCRDNWHGSNRPWVSFDQNLDYQIGYICSGVFGDNPRPKDGTGSCGPVYVDGANGVKGFSYRYGNGVWIGRTKSNSSRHGFEMIWDPNGWTETDSKFSVRQDVVAMTDWSGYSGSFVQHPELTGLDCMRPCFWVELIRGRPKENTIWTSGSSISFCGVNSDTVDWSWPDGAELPFTIDK.

Topologically, residues 1–6 (MNPNQK) are intravirion. Residues 7–27 (IITIGSICMVVGIISLILQIG) form a helical membrane-spanning segment. Residues 11–33 (GSICMVVGIISLILQIGNIISIW) are involved in apical transport and lipid raft association. Residues 28–469 (NIISIWISHS…GAELPFTIDK (442 aa)) are Virion surface-facing. The tract at residues 36–90 (HSIQTGSQNHTGICNQNIITYKNSTWVNQTYVNISNTNVVAGQDTTSVILTGNSS) is hypervariable stalk region. N-linked (GlcNAc...) asparagine; by host glycans are attached at residues Asn-44, Asn-58, Asn-63, Asn-68, and Asn-88. The interval 91–469 (LCPIRGWAIY…GAELPFTIDK (379 aa)) is head of neuraminidase. Cystine bridges form between Cys-92-Cys-417, Cys-124-Cys-129, Cys-184-Cys-231, Cys-233-Cys-238, Cys-279-Cys-292, Cys-281-Cys-290, Cys-318-Cys-335, and Cys-421-Cys-446. Residue Arg-118 participates in substrate binding. Asn-146 carries N-linked (GlcNAc...) asparagine; by host glycosylation. Asp-151 acts as the Proton donor/acceptor in catalysis. Substrate is bound at residue Arg-152. The N-linked (GlcNAc...) asparagine; by host glycan is linked to Asn-235. Substrate is bound at residue 277–278 (EE). Residue Arg-293 coordinates substrate. Ca(2+) contacts are provided by Asp-294, Gly-298, Asp-324, and Asn-344. Asn-365 carries N-linked (GlcNAc...) asparagine; by host glycosylation. Position 368 (Arg-368) interacts with substrate. The active-site Nucleophile is the Tyr-402.

This sequence belongs to the glycosyl hydrolase 34 family. Homotetramer. It depends on Ca(2+) as a cofactor. N-glycosylated.

It localises to the virion membrane. The protein resides in the host apical cell membrane. It carries out the reaction Hydrolysis of alpha-(2-&gt;3)-, alpha-(2-&gt;6)-, alpha-(2-&gt;8)- glycosidic linkages of terminal sialic acid residues in oligosaccharides, glycoproteins, glycolipids, colominic acid and synthetic substrates.. Inhibited by the neuraminidase inhibitors zanamivir (Relenza) and oseltamivir (Tamiflu). These drugs interfere with the release of progeny virus from infected cells and are effective against all influenza strains. Resistance to neuraminidase inhibitors is quite rare. Functionally, catalyzes the removal of terminal sialic acid residues from viral and cellular glycoconjugates. Cleaves off the terminal sialic acids on the glycosylated HA during virus budding to facilitate virus release. Additionally helps virus spread through the circulation by further removing sialic acids from the cell surface. These cleavages prevent self-aggregation and ensure the efficient spread of the progeny virus from cell to cell. Otherwise, infection would be limited to one round of replication. Described as a receptor-destroying enzyme because it cleaves a terminal sialic acid from the cellular receptors. May facilitate viral invasion of the upper airways by cleaving the sialic acid moieties on the mucin of the airway epithelial cells. Likely to plays a role in the budding process through its association with lipid rafts during intracellular transport. May additionally display a raft-association independent effect on budding. Plays a role in the determination of host range restriction on replication and virulence. Sialidase activity in late endosome/lysosome traffic seems to enhance virus replication. The polypeptide is Neuraminidase (Influenza A virus (strain A/Henry/1936 H1N1)).